Reading from the N-terminus, the 492-residue chain is NADH-ubiquinone oxidoreductase chain 4 (492 aa).

15 consecutive transmembrane segments (helical) span residues 9 to 29 (LILTSLTPLIGVFILLLIPSA), 36 to 56 (NFALWISCLTFLFSLLLWIQF), 63 to 83 (FQFSTTFLWFPFFNLYYTIGI), 86 to 106 (ISLFFILLTTLLIISCILVSW), 115 to 135 (DYLICFLILEFLLIQVFSVLD), 136 to 156 (LLLFYIYFESVLIPMFLIVGV), 170 to 190 (FFLYTLIGSLLMLLALLNIYF), 211 to 231 (IFLWLSFFASFAVKIPMIPFH), 242 to 262 (PTAGSVILAGILLKMGGYGFL), 269 to 289 (FPVASIFFTPFIFTLSLVAII), 304 to 324 (IIAYSSVSHMGFVTIGIFSLN), 332 to 352 (ILLMLSHGLVSSALFLCIGVL), 370 to 390 (VMPLFGVFFLFFTFANLGFPG), 410 to 430 (TLTLFASLGMIFGAAYSIWLF), and 454 to 474 (FWILIPLAILILWMGIYPNSF).

Belongs to the complex I subunit 4 family.

It localises to the mitochondrion membrane. It carries out the reaction a ubiquinone + NADH + 5 H(+)(in) = a ubiquinol + NAD(+) + 4 H(+)(out). Functionally, core subunit of the mitochondrial membrane respiratory chain NADH dehydrogenase (Complex I) that is believed to belong to the minimal assembly required for catalysis. Complex I functions in the transfer of electrons from NADH to the respiratory chain. The immediate electron acceptor for the enzyme is believed to be ubiquinone. This chain is NADH-ubiquinone oxidoreductase chain 4 (ND4), found in Chondrus crispus (Carrageen Irish moss).